The sequence spans 723 residues: F-box protein MAX2 homolog B (723 aa).

Residues 2–55 (AKTPIPFTTLNDLPDVILSNIIAAVSDTRSRNATALVCHKWLVLERSTRTSLTL) enclose the F-box domain.

In terms of assembly, part of a putative SCF (SKP1/Cullin/F-box) ubiquitin ligase complex. Interacts with KAI2IA in the presence of (-)-germacrene D. As to expression, mainly expressed in fully expanded leaves, lateral roots, axillary and shoot apex, and, to a lower extent, in internodes and nodes.

Its subcellular location is the nucleus. It localises to the cytoplasm. In terms of biological role, component of SCF(ASK-cullin-F-box) E3 ubiquitin ligase complexes, which may mediate the ubiquitination and subsequent proteasomal degradation of target proteins. Is necessary for responses to strigolactones and may be involved in the ubiquitin-mediated degradation of specific proteins that activate axillary growth. Targets probably SMAX1A to degradation upon the formation of an E3 SCF ubiquitin ligase complex (ASK-cullin-F-box) containing MAX2B and KAI2IA in response to (-)-germacrene D in the stigma. This chain is F-box protein MAX2 homolog B, found in Petunia hybrida (Petunia).